Consider the following 485-residue polypeptide: Glutamyl-tRNA(Gln) amidotransferase subunit A (485 aa).

Catalysis depends on charge relay system residues K78 and S153. Catalysis depends on S177, which acts as the Acyl-ester intermediate.

Belongs to the amidase family. GatA subfamily. As to quaternary structure, heterotrimer of A, B and C subunits.

The catalysed reaction is L-glutamyl-tRNA(Gln) + L-glutamine + ATP + H2O = L-glutaminyl-tRNA(Gln) + L-glutamate + ADP + phosphate + H(+). Its function is as follows. Allows the formation of correctly charged Gln-tRNA(Gln) through the transamidation of misacylated Glu-tRNA(Gln) in organisms which lack glutaminyl-tRNA synthetase. The reaction takes place in the presence of glutamine and ATP through an activated gamma-phospho-Glu-tRNA(Gln). This is Glutamyl-tRNA(Gln) amidotransferase subunit A from Geobacter sulfurreducens (strain ATCC 51573 / DSM 12127 / PCA).